A 611-amino-acid chain; its full sequence is Leukotriene A-4 hydrolase (611 aa).

Lys-73 carries the post-translational modification N6-acetyllysine. A peptide-binding positions include 135–137 (QCQ) and 267–272 (SYGGME). His-296 contacts Zn(2+). Glu-297 serves as the catalytic Proton acceptor. Positions 300 and 319 each coordinate Zn(2+). Lys-337 is modified (N6-acetyllysine). Tyr-384 functions as the Proton donor in the catalytic mechanism. Position 414 is an N6-acetyllysine (Lys-414). Ser-416 carries the post-translational modification Phosphoserine. Residue 564–566 (RMK) participates in a peptide binding. An N6-acetyllysine modification is found at Lys-573.

The protein belongs to the peptidase M1 family. As to quaternary structure, monomer. It depends on Zn(2+) as a cofactor. Post-translationally, phosphorylation at Ser-416 inhibits leukotriene-A4 hydrolase activity. activity.

The protein localises to the cytoplasm. It carries out the reaction leukotriene A4 + H2O = leukotriene B4. The enzyme catalyses (5S,6S)-epoxy-(18R)-hydroxy-(7E,9E,11Z,14Z,16E)-eicosapentaenoate + H2O = resolvin E1. It catalyses the reaction (5S,6S)-epoxy-(18S)-hydroxy-(7E,9E,11Z,14Z,16E)-eicosapentaenoate + H2O = 18S-resolvin E1. The catalysed reaction is Release of the N-terminal residue from a tripeptide.. It participates in lipid metabolism; leukotriene B4 biosynthesis. With respect to regulation, inhibited by bestatin. The epoxide hydrolase activity is restrained by suicide inactivation that involves binding of LTA4 to Tyr-379. 4-(4-benzylphenyl)thiazol-2-amine (ARM1) selectively inhibits the epoxide hydrolase activity. In terms of biological role, bifunctional zinc metalloenzyme that comprises both epoxide hydrolase (EH) and aminopeptidase activities. Acts as an epoxide hydrolase to catalyze the conversion of LTA4 to the pro-inflammatory mediator leukotriene B4 (LTB4). Also has aminopeptidase activity, with high affinity for N-terminal arginines of various synthetic tripeptides. In addition to its pro-inflammatory EH activity, may also counteract inflammation by its aminopeptidase activity, which inactivates by cleavage another neutrophil attractant, the tripeptide Pro-Gly-Pro (PGP), a bioactive fragment of collagen generated by the action of matrix metalloproteinase-9 (MMP9) and prolylendopeptidase (PREPL). Involved also in the biosynthesis of resolvin E1 and 18S-resolvin E1 from eicosapentaenoic acid, two lipid mediators that show potent anti-inflammatory and pro-resolving actions. This chain is Leukotriene A-4 hydrolase (LTA4H), found in Cavia porcellus (Guinea pig).